The sequence spans 316 residues: Ribosomal RNA small subunit methyltransferase H (316 aa).

Residues 35–37, Asp-55, Phe-79, Asp-101, and Gln-108 each bind S-adenosyl-L-methionine; that span reads GGH.

The protein belongs to the methyltransferase superfamily. RsmH family.

It localises to the cytoplasm. The catalysed reaction is cytidine(1402) in 16S rRNA + S-adenosyl-L-methionine = N(4)-methylcytidine(1402) in 16S rRNA + S-adenosyl-L-homocysteine + H(+). Its function is as follows. Specifically methylates the N4 position of cytidine in position 1402 (C1402) of 16S rRNA. The chain is Ribosomal RNA small subunit methyltransferase H from Vibrio vulnificus (strain CMCP6).